A 339-amino-acid polypeptide reads, in one-letter code: Ketol-acid reductoisomerase (NADP(+)) (339 aa).

Residues 1–182 (MRVYYDRDAD…GGGRSGIIET (182 aa)) enclose the KARI N-terminal Rossmann domain. NADP(+) is bound by residues 24–27 (YGSQ), K48, S51, T53, and 83–86 (DELQ). The active site involves H108. An NADP(+)-binding site is contributed by G134. Residues 183-328 (NFREECETDL…AKLRGMMPWI (146 aa)) enclose the KARI C-terminal knotted domain. Mg(2+)-binding residues include D191, E195, E227, and E231. S252 serves as a coordination point for substrate.

The protein belongs to the ketol-acid reductoisomerase family. The cofactor is Mg(2+).

The enzyme catalyses (2R)-2,3-dihydroxy-3-methylbutanoate + NADP(+) = (2S)-2-acetolactate + NADPH + H(+). It catalyses the reaction (2R,3R)-2,3-dihydroxy-3-methylpentanoate + NADP(+) = (S)-2-ethyl-2-hydroxy-3-oxobutanoate + NADPH + H(+). Its pathway is amino-acid biosynthesis; L-isoleucine biosynthesis; L-isoleucine from 2-oxobutanoate: step 2/4. It functions in the pathway amino-acid biosynthesis; L-valine biosynthesis; L-valine from pyruvate: step 2/4. Involved in the biosynthesis of branched-chain amino acids (BCAA). Catalyzes an alkyl-migration followed by a ketol-acid reduction of (S)-2-acetolactate (S2AL) to yield (R)-2,3-dihydroxy-isovalerate. In the isomerase reaction, S2AL is rearranged via a Mg-dependent methyl migration to produce 3-hydroxy-3-methyl-2-ketobutyrate (HMKB). In the reductase reaction, this 2-ketoacid undergoes a metal-dependent reduction by NADPH to yield (R)-2,3-dihydroxy-isovalerate. In Rhizobium johnstonii (strain DSM 114642 / LMG 32736 / 3841) (Rhizobium leguminosarum bv. viciae), this protein is Ketol-acid reductoisomerase (NADP(+)).